The chain runs to 344 residues: Fructose-1,6-bisphosphatase class 1 (344 aa).

Mg(2+) contacts are provided by Glu92, Asp115, Leu117, and Asp118. Residues Asp118–Ser121, Asn211, Tyr244, and Lys274 contribute to the substrate site. Glu280 provides a ligand contact to Mg(2+).

This sequence belongs to the FBPase class 1 family. As to quaternary structure, homotetramer. Mg(2+) serves as cofactor.

It localises to the cytoplasm. It catalyses the reaction beta-D-fructose 1,6-bisphosphate + H2O = beta-D-fructose 6-phosphate + phosphate. It participates in carbohydrate biosynthesis; gluconeogenesis. This Aeromonas salmonicida (strain A449) protein is Fructose-1,6-bisphosphatase class 1.